Consider the following 258-residue polypeptide: UPF0246 protein VS_0505 (258 aa).

The protein belongs to the UPF0246 family.

The sequence is that of UPF0246 protein VS_0505 from Vibrio atlanticus (strain LGP32) (Vibrio splendidus (strain Mel32)).